We begin with the raw amino-acid sequence, 178 residues long: Cell division protein ZapC (178 aa).

The protein belongs to the ZapC family. Interacts directly with FtsZ.

It localises to the cytoplasm. Contributes to the efficiency of the cell division process by stabilizing the polymeric form of the cell division protein FtsZ. Acts by promoting interactions between FtsZ protofilaments and suppressing the GTPase activity of FtsZ. In Pseudoalteromonas atlantica (strain T6c / ATCC BAA-1087), this protein is Cell division protein ZapC.